The primary structure comprises 138 residues: Large ribosomal subunit protein mL54 (138 aa).

Residues 1-14 (MATKRLFGATRTWA) constitute a mitochondrion transit peptide.

It belongs to the mitochondrion-specific ribosomal protein mL54 family. In terms of assembly, component of the mitochondrial large ribosomal subunit (mt-LSU). Mature mammalian 55S mitochondrial ribosomes consist of a small (28S) and a large (39S) subunit. The 28S small subunit contains a 12S ribosomal RNA (12S mt-rRNA) and 30 different proteins. The 39S large subunit contains a 16S rRNA (16S mt-rRNA), a copy of mitochondrial valine transfer RNA (mt-tRNA(Val)), which plays an integral structural role, and 52 different proteins.

The protein localises to the mitochondrion. The chain is Large ribosomal subunit protein mL54 (MRPL54) from Homo sapiens (Human).